A 227-amino-acid polypeptide reads, in one-letter code: Urease accessory protein UreF (227 aa).

Belongs to the UreF family. As to quaternary structure, ureD, UreF and UreG form a complex that acts as a GTP-hydrolysis-dependent molecular chaperone, activating the urease apoprotein by helping to assemble the nickel containing metallocenter of UreC. The UreE protein probably delivers the nickel.

The protein localises to the cytoplasm. Required for maturation of urease via the functional incorporation of the urease nickel metallocenter. In Shewanella halifaxensis (strain HAW-EB4), this protein is Urease accessory protein UreF.